The following is a 155-amino-acid chain: MHFLITNEVKKIFNDKLYSQRFKQITDLVSTKLNIDKKRFFECHFVDEKTIQEINKNYRNKDYITDVISFAFDDGEIITPLLGEMYICYQKVVDQASQFAHSFERELCFLFTHGLLHLLGYDHIKIEDEKIMFALQDEILNELKITRNINGARND.

Residues His113, His117, and His123 each contribute to the Zn(2+) site.

This sequence belongs to the endoribonuclease YbeY family. Requires Zn(2+) as cofactor.

It is found in the cytoplasm. Functionally, single strand-specific metallo-endoribonuclease involved in late-stage 70S ribosome quality control and in maturation of the 3' terminus of the 16S rRNA. This chain is Endoribonuclease YbeY, found in Ureaplasma parvum serovar 3 (strain ATCC 27815 / 27 / NCTC 11736).